The following is a 2581-amino-acid chain: MADPIMDLFDDPNLFGLDSLTDDSFNQVTQDPIEEALGLPSSLDSLDQMNQDGGGGDVGNSSASELVPPPEETAPTELSKESTAPAPESITLHDYTTQPASQEQPAQPVLQTSTPTSGLLQVSKSQEILSQGNPFMGVSATAVSSSSAGGQPPQSAPKIVILKAPPSSSVTGAHVAQIQAQGITSTAQPLVAGTANGGKVTFTKVLTGTPLRPGVSIVSGNTVLAAKVPGNQAAVQRIVQPSRPVKQLVLQPVKGSAPAGNPGATGPPLKPAVTLTSTPTQGESKRITLVLQQPQSGGPQGHRHVVLGSLPGKIVLQGNQLAALTQAKNAQGQPAKVVTIQLQVQQPQQKIQIVPQPPSSQPQPQQPPSTQPVTLSSVQQAQIMGPGQSPGQRLSVPVKVVLQPQAGSSQGASSGLSVVKVLSASEVAALSSPASSAPHSGGKTGMEENRRLEHQKKQEKANRIVAEAIARARARGEQNIPRVLNEDELPSVRPEEEGEKKRRKKSAGERLKEEKPKKSKTSGASKTKGKSKLNTITPVVGKKRKRNTSSDNSDVEVMPAQSPREDEESSIQKRRSNRQVKRKKYTEDLDIKITDDEEEEEVDVTGPIKPEPILPEPVQEPDGETLPSMQFFVENPSEEDAAIVDKVLSMRIVKKELPSGQYTEAEEFFVKYKNYSYLHCEWATISQLEKDKRIHQKLKRFKTKMAQMRHFFHEDEEPFNPDYVEVDRILDESHSIDKDNGEPVIYYLVKWCSLPYEDSTWELKEDVDEGKIREFKRIQSRHPELKRVNRPQASAWKKLELSHEYKNRNQLREYQLEGVNWLLFNWYNRQNCILADEMGLGKTIQSIAFLQEVYNVGIHGPFLVIAPLSTITNWEREFNTWTEMNTIVYHGSLASRQMIQQYEMYCKDSRGRLIPGAYKFDALITTFEMILSDCPELREIEWRCVIIDEAHRLKNRNCKLLDSLKHMDLEHKVLLTGTPLQNTVEELFSLLHFLEPSQFPSESEFLKDFGDLKTEEQVQKLQAILKPMMLRRLKEDVEKNLAPKQETIIEVELTNIQKKYYRAILEKNFSFLSKGAGHTNMPNLLNTMMELRKCCNHPYLINGAEEKILTEFREACHIIPHDFHLQAMVRSAGKLVLIDKLLPKLKAGGHKVLIFSQMVRCLDILEDYLIQRRYLYERIDGRVRGNLRQAAIDRFSKPDSDRFVFLLCTRAGGLGINLTAADTCIIFDSDWNPQNDLQAQARCHRIGQSKAVKVYRLITRNSYEREMFDKASLKLGLDKAVLQSMSGRDGNITGIQQFSKKEIEDLLRKGAYAAIMEEDDEGSKFCEEDIDQILLRRTTTITIESEGKGSTFAKASFVASENRTDISLDDPNFWQKWAKKADLDMDLLNSKNNLVIDTPRVRKQTRHFSTLKDDDLVEFSDLESEDDERPRSRRHDRHHAYGRTDCFRVEKHLLVYGWGRWRDILSHGRFKRRMTERDVETICRAILVYCLLHYRGDENIKGFIWDLISPAENGKTKELQNHSGLSIPVPRGRKGKKVKSQSTFDIHKADWIRKYNPDTLFQDESYKKHLKHQCNKVLLRVRMLYYLRQEVIGDQAEKVLGGAIASEIDIWFPVVDQLEVPTTWWDSEADKSLLIGVFKHGYEKYNTMRADPALCFLEKAGRPDDKAIAAEHRVLDNFSDIVEGVDFDKDCEDPEYKPLQGPPKDQDDEGDPLMMMDEEISVIDGDEAQVTQQPGHLFWPPGSALTARLRRLVTAYQRSYKREQMKIEAAERGDRRRRRCEAAFKLKEIARREKQQRWTRREQTDFYRVVSTFGVEYDPDTMQFHWDRFRTFARLDKKTDESLTKYFHGFVAMCRQVCRLPPAAGDEPPDPNLFIEPITEERASRTLYRIELLRRLREQVLCHPLLEDRLALCQPPGPELPKWWEPVRHDGELLRGAARHGVSQTDCNIMQDPDFSFLAARMNYMQNHQAGAPAPSLSRCSTPLLHQQYTSRTASPLPLRPDAPVEKSPEETATQVPSLESLTLKLEHEVVARSRPTPQDYEMRVSPSDTTPLVSRSVPPVKLEDEDDSDSELDLSKLSPSSSSSSSSSSSSSSTDESEDEKEEKLTDQSRSKLYDEESLLSLTMSQDGFPNEDGEQMTPELLLLQERQRASEWPKDRVLINRIDLVCQAVLSGKWPSSRRSQEMVTGGILGPGNHLLDSPSLTPGEYGDSPVPTPRSSSAASMAEEEASAVSTAAAQFTKLRRGMDEKEFTVQIKDEEGLKLTFQKHKLMANGVMGDGHPLFHKKKGNRKKLVELEVECMEEPNHLDVDLETRIPVINKVDGTLLVGEDAPRRAELEMWLQGHPEFAVDPRFLAYMEDRRKQKWQRCKKNNKAELNCLGMEPVQTANSRNGKKGHHTETVFNRVLPGPIAPESSKKRARRMRPDLSKMMALMQGGSTGSLSLHNTFQHSSSGLQSVSSLGHSSATSASLPFMPFVMGGAPSSPHVDSSTMLHHHHHHPHPHHHHHHHPGLRAPGYPSSPVTTASGTTLRLPPLQPEEDDDEDEEDDDDLSQGYDSSERDFSLIDDPMMPANSDSSEDADD.

Disordered regions lie at residues 22-114, 253-283, 349-392, 429-582, and 596-615; these read DDSF…QTST, VKGS…TQGE, QKIQ…SPGQ, ALSS…QVKR, and DEEE…PILP. Polar residues-rich tracts occupy residues 42–51 and 94–114; these read SLDSLDQMNQ and DYTT…QTST. Low complexity predominate over residues 255-267; it reads GSAPAGNPGATGP. Pro residues predominate over residues 355-370; sequence PQPPSSQPQPQQPPST. S432 carries the phosphoserine modification. Composition is skewed to basic and acidic residues over residues 445 to 462 and 493 to 516; these read GMEE…EKAN and RPEE…EEKP. Phosphoserine occurs at positions 553 and 562. Basic residues predominate over residues 572–582; the sequence is QKRRSNRQVKR. Residue K609 forms a Glycyl lysine isopeptide (Lys-Gly) (interchain with G-Cter in SUMO) linkage. 2 Chromo domains span residues 642 to 709 and 724 to 790; these read AIVD…AQMR and VEVD…RVNR. A Helicase ATP-binding domain is found at 823-997; it reads LFNWYNRQNC…FSLLHFLEPS (175 aa). 836-843 provides a ligand contact to ATP; sequence DEMGLGKT. The DEAH box signature appears at 948–951; that stretch reads DEAH. Residues 1137–1288 enclose the Helicase C-terminal domain; sequence LIDKLLPKLK…KAVLQSMSGR (152 aa). Phosphoserine is present on residues S1420 and S1424. A disordered region spans residues 1692–1712; that stretch reads EDPEYKPLQGPPKDQDDEGDP. The interval 1789 to 2302 is interaction with FAM124B; the sequence is IARREKQQRW…LVELEVECME (514 aa). Residues S1976 and S1978 each carry the phosphoserine modification. The segment at 1991–2116 is disordered; that stretch reads SRTASPLPLR…TDQSRSKLYD (126 aa). At T1993 the chain carries Phosphothreonine. 2 positions are modified to phosphoserine: S1995 and S2008. Over residues 2011 to 2021 the composition is skewed to polar residues; sequence ETATQVPSLES. A Glycyl lysine isopeptide (Lys-Gly) (interchain with G-Cter in SUMO2) cross-link involves residue K2025. S2046 bears the Phosphoserine mark. At T2051 the chain carries Phosphothreonine. A compositionally biased stretch (acidic residues) spans 2064–2073; the sequence is EDEDDSDSEL. Phosphoserine occurs at positions 2069 and 2071. Residues 2076–2095 are compositionally biased toward low complexity; sequence SKLSPSSSSSSSSSSSSSST. Basic and acidic residues predominate over residues 2103-2116; the sequence is EEKLTDQSRSKLYD. Phosphoserine occurs at positions 2182, 2200, and 2202. A disordered region spans residues 2189-2229; the sequence is GILGPGNHLLDSPSLTPGEYGDSPVPTPRSSSAASMAEEEA. A Phosphothreonine modification is found at T2204. Residue S2211 is modified to Phosphoserine. T2215 is modified (phosphothreonine). A compositionally biased stretch (low complexity) spans 2218–2229; it reads SSSAASMAEEEA. Position 2223 is a phosphoserine (S2223). Residue K2256 forms a Glycyl lysine isopeptide (Lys-Gly) (interchain with G-Cter in SUMO2) linkage. A disordered region spans residues 2481–2581; the sequence is PSSPHVDSST…NSDSSEDADD (101 aa). The span at 2492-2510 shows a compositional bias: basic residues; the sequence is LHHHHHHPHPHHHHHHHPG. At S2519 the chain carries Phosphoserine. Over residues 2519-2528 the composition is skewed to polar residues; it reads SPVTTASGTT. Residues 2536–2550 are compositionally biased toward acidic residues; sequence PEEDDDEDEEDDDDL.

The protein belongs to the SNF2/RAD54 helicase family. CHD8 subfamily. Interacts with p53/TP53, histone H1, CTNNB1, CTCF and PIAS3. Component of some MLL1/MLL complex, at least composed of the core components KMT2A/MLL1, ASH2L, HCFC1/HCF1, WDR5 and RBBP5, as well as the facultative components BACC1, CHD8, E2F6, HSP70, INO80C, KANSL1, LAS1L, MAX, MCRS1, MGA, KAT8/MOF, PELP1, PHF20, PRP31, RING2, RUVB1/TIP49A, RUVB2/TIP49B, SENP3, TAF1, TAF4, TAF6, TAF7, TAF9 and TEX10. Interacts with CHD7. Interacts with FAM124B. Interacts with TLK2. Interacts with HNRNPL in an RNA-dependent manner. Post-translationally, sumoylated.

It localises to the nucleus. It catalyses the reaction ATP + H2O = ADP + phosphate + H(+). In terms of biological role, ATP-dependent chromatin-remodeling factor, it slides nucleosomes along DNA; nucleosome sliding requires ATP. Acts as a transcription repressor by remodeling chromatin structure and recruiting histone H1 to target genes. Suppresses p53/TP53-mediated apoptosis by recruiting histone H1 and preventing p53/TP53 transactivation activity. Acts as a negative regulator of Wnt signaling pathway by regulating beta-catenin (CTNNB1) activity. Negatively regulates CTNNB1-targeted gene expression by being recruited specifically to the promoter regions of several CTNNB1 responsive genes. Involved in both enhancer blocking and epigenetic remodeling at chromatin boundary via its interaction with CTCF. Acts as a suppressor of STAT3 activity by suppressing the LIF-induced STAT3 transcriptional activity. Also acts as a transcription activator via its interaction with ZNF143 by participating in efficient U6 RNA polymerase III transcription. Regulates alternative splicing of a core group of genes involved in neuronal differentiation, cell cycle and DNA repair. Enables H3K36me3-coupled transcription elongation and co-transcriptional RNA processing likely via interaction with HNRNPL. The sequence is that of Chromodomain-helicase-DNA-binding protein 8 from Homo sapiens (Human).